Here is a 298-residue protein sequence, read N- to C-terminus: GTPase Era (298 aa).

The 168-residue stretch at 3 to 170 (KSGFVAILGR…IKLLTDNLEE (168 aa)) folds into the Era-type G domain. The tract at residues 11 to 18 (GRPNVGKS) is G1. 11–18 (GRPNVGKS) contacts GTP. The segment at 37–41 (QTTRN) is G2. Positions 58-61 (DTPG) are G3. GTP-binding positions include 58–62 (DTPGI) and 120–123 (NKID). The G4 stretch occupies residues 120–123 (NKID). Residues 149 to 151 (ISA) are G5. One can recognise a KH type-2 domain in the interval 201–279 (TQQEVPHSVA…YLETWVKVKK (79 aa)).

The protein belongs to the TRAFAC class TrmE-Era-EngA-EngB-Septin-like GTPase superfamily. Era GTPase family. In terms of assembly, monomer.

The protein localises to the cytoplasm. The protein resides in the cell membrane. An essential GTPase that binds both GDP and GTP, with rapid nucleotide exchange. Plays a role in 16S rRNA processing and 30S ribosomal subunit biogenesis and possibly also in cell cycle regulation and energy metabolism. The polypeptide is GTPase Era (Streptococcus pyogenes serotype M3 (strain ATCC BAA-595 / MGAS315)).